A 214-amino-acid polypeptide reads, in one-letter code: ATP phosphoribosyltransferase (214 aa).

The protein belongs to the ATP phosphoribosyltransferase family. Short subfamily. In terms of assembly, heteromultimer composed of HisG and HisZ subunits.

The protein localises to the cytoplasm. The catalysed reaction is 1-(5-phospho-beta-D-ribosyl)-ATP + diphosphate = 5-phospho-alpha-D-ribose 1-diphosphate + ATP. It participates in amino-acid biosynthesis; L-histidine biosynthesis; L-histidine from 5-phospho-alpha-D-ribose 1-diphosphate: step 1/9. Catalyzes the condensation of ATP and 5-phosphoribose 1-diphosphate to form N'-(5'-phosphoribosyl)-ATP (PR-ATP). Has a crucial role in the pathway because the rate of histidine biosynthesis seems to be controlled primarily by regulation of HisG enzymatic activity. The protein is ATP phosphoribosyltransferase of Alcanivorax borkumensis (strain ATCC 700651 / DSM 11573 / NCIMB 13689 / SK2).